The chain runs to 130 residues: MRHRKSGRQLNRNSSHRQAMFRNMASSLVRHEVIKTTVAKAKELRRVVEPLITLAKSDSVANRRLAFARTRDAEVVGKLFNELGPRYQERPGGYTRILKCGLRTGDKAPMAYIELVGRPEAAEAVEEAAE.

This sequence belongs to the bacterial ribosomal protein bL17 family. In terms of assembly, part of the 50S ribosomal subunit. Contacts protein L32.

In Shewanella loihica (strain ATCC BAA-1088 / PV-4), this protein is Large ribosomal subunit protein bL17.